The following is a 191-amino-acid chain: Phosphoheptose isomerase (191 aa).

The region spanning 37–191 (ITSSLKQGGK…LILLIEQSLL (155 aa)) is the SIS domain. 52-54 (NGG) contacts substrate. Positions 61 and 65 each coordinate Zn(2+). Substrate is bound by residues Glu65, 93–94 (ND), 119–121 (STS), Ser124, and Gln172. 2 residues coordinate Zn(2+): Gln172 and His180.

This sequence belongs to the SIS family. GmhA subfamily. It depends on Zn(2+) as a cofactor.

The protein resides in the cytoplasm. It carries out the reaction 2 D-sedoheptulose 7-phosphate = D-glycero-alpha-D-manno-heptose 7-phosphate + D-glycero-beta-D-manno-heptose 7-phosphate. The protein operates within carbohydrate biosynthesis; D-glycero-D-manno-heptose 7-phosphate biosynthesis; D-glycero-alpha-D-manno-heptose 7-phosphate and D-glycero-beta-D-manno-heptose 7-phosphate from sedoheptulose 7-phosphate: step 1/1. Functionally, catalyzes the isomerization of sedoheptulose 7-phosphate in D-glycero-D-manno-heptose 7-phosphate. The sequence is that of Phosphoheptose isomerase from Cytophaga hutchinsonii (strain ATCC 33406 / DSM 1761 / CIP 103989 / NBRC 15051 / NCIMB 9469 / D465).